Consider the following 149-residue polypeptide: Extracellular protease inhibitor 1 (149 aa).

An N-terminal signal peptide occupies residues 1–16 (MKSALLFTLVVAAVHA). Kazal-like domains lie at 29-86 (ESNE…SSTG) and 88-141 (QPPS…ACVG). 2 disulfide bridges follow: Cys35-Cys65 and Cys39-Cys58. An N-linked (GlcNAc...) asparagine glycan is attached at Asn67. Cystine bridges form between Cys94/Cys124, Cys98/Cys117, and Cys106/Cys139.

As to quaternary structure, interacts with host subtilisin-like protease P69B.

It is found in the secreted. Functionally, secreted effector that interacts with and inhibits the pathogenesis-related P69B subtilisin-like serine protease of host tomato. Inhibition of host proteases by a pathogen extracellular protease inhibitor forms a specific type of defense-counterdefense mechanism between plants and microbial pathogens. The protein is Extracellular protease inhibitor 1 of Phytophthora infestans (Potato late blight agent).